A 179-amino-acid chain; its full sequence is Archaemetzincin (179 aa).

Zn(2+) is bound at residue H128. E129 functions as the Proton acceptor in the catalytic mechanism. The Zn(2+) site is built by H132, H138, C139, C144, C163, and C166.

Belongs to the peptidase M54 family. In terms of assembly, monomer. It depends on Zn(2+) as a cofactor.

Its function is as follows. Probable zinc metalloprotease whose natural substrate is unknown. This Methanocaldococcus jannaschii (strain ATCC 43067 / DSM 2661 / JAL-1 / JCM 10045 / NBRC 100440) (Methanococcus jannaschii) protein is Archaemetzincin.